Here is a 310-residue protein sequence, read N- to C-terminus: Homoserine kinase (310 aa).

Residue 91-101 (PIGSGLGSSAC) coordinates ATP.

It belongs to the GHMP kinase family. Homoserine kinase subfamily.

It is found in the cytoplasm. It carries out the reaction L-homoserine + ATP = O-phospho-L-homoserine + ADP + H(+). Its pathway is amino-acid biosynthesis; L-threonine biosynthesis; L-threonine from L-aspartate: step 4/5. Catalyzes the ATP-dependent phosphorylation of L-homoserine to L-homoserine phosphate. The chain is Homoserine kinase from Escherichia coli O6:K15:H31 (strain 536 / UPEC).